The primary structure comprises 540 residues: MLLLWVSVVAASALAAPAPGADGQRRGAIQAWPDAPNVLLVVSDSFDGRLTFYPGSQVVKLPFINFMKAHGTSFLNAYTNSPICCPSRAAMWSGLFTHLTESWNNFKGLDPNYTTWMDVMEKHGYRTQKFGKLDYTSGHHSISNRVEAWTRDVAFLLRQEGRPMVNLAPKKTKVRVMQVDWKNTDRAVNWLRKEASNSTQPFVLYLGLNLPHPYPSPSSGENFGSSTFHTSRYWLKKVSYDAIKIPKWSPLSEMHPVDYYSSYTKNCTGKFTEKEIKNIRAFYYAMCAETDAMLGEIILALRQLGLLQKTIVIYTSDHGELAMEHRQFYKMSMYEASSHVPLLIMGPGIQANLQVSSVVSLVDIYPTMLDIAGIPLPQNLSGYSLLPSSSEMFKNEQKFKNLHPPWILSEFHGCNVNASTYMLRTNQWKYIAYSDGASVLPQLFDLSSDPDELTNIAAKFPEVTSSLDQKLRSIINYPKVSASVHQYNKEQFIKWKQSIGQNYSNVIANLRWHQDWLKKPKKYENAIDQWLKSHSDAKTI.

Positions 1–22 are cleaved as a signal peptide; it reads MLLLWVSVVAASALAAPAPGAD. Positions 44 and 84 each coordinate Ca(2+). Residue cysteine 84 is the Nucleophile of the active site. At cysteine 84 the chain carries 3-oxoalanine (Cys). Asparagine 112 carries N-linked (GlcNAc...) asparagine glycosylation. Position 132 (lysine 132) interacts with substrate. Residue asparagine 197 is glycosylated (N-linked (GlcNAc...) asparagine). Histidine 255 provides a ligand contact to substrate. An N-linked (GlcNAc...) asparagine glycan is attached at asparagine 266. 2 residues coordinate Ca(2+): aspartate 317 and histidine 318. Residues asparagine 379, asparagine 417, and asparagine 502 are each glycosylated (N-linked (GlcNAc...) asparagine).

It belongs to the sulfatase family. Ca(2+) is required as a cofactor. In terms of processing, the conversion to 3-oxoalanine (also known as C-formylglycine, FGly), of a serine or cysteine residue in prokaryotes and of a cysteine residue in eukaryotes, is critical for catalytic activity. Post-translationally, the 75-kDa precursor undergoes proteolytic processing to yield a 23 kDa form. N-glycosylated with both high mannose and complex type sugars.

It is found in the secreted. It localises to the lysosome. The catalysed reaction is an aryl sulfate + H2O = a phenol + sulfate + H(+). The enzyme catalyses Hydrolysis of the 2-sulfate groups of the 2-O-sulfo-D-glucuronate residues of chondroitin sulfate, heparin and heparitin sulfate.. In terms of biological role, catalyzes the hydrolysis of pseudosubstrates such as p-nitrocatechol sulfate and p-nitrophenyl sulfate. Catalyzes the hydrolysis of the 2-sulfate groups of the 2-O-sulfo-D-glucuronate residues of chondroitin sulfate, heparin and heparitin sulfate. Acts selectively on 2-sulfoglucuronate and lacks activity against 2-sulfoiduronate. This Bos taurus (Bovine) protein is Arylsulfatase K (ARSK).